The chain runs to 320 residues: MSIFKRQWFVLISAVSAALSVVLFPLEVFSASPNSGGGGVQQMNILQAIVLGFVQGMTEFLPISSTAHLKVVPVALGWGDPGVAFTAIIQLGSIAAVLWYFWGDLTRIIKGATRAIALKDYADYDLRLSLGIVLGTIPIVFFGLLIKTFIPDYDSSPIRSLGAIAVASIVMSLLLGVGEKLGKRERDFEHLTMQDGLLMGLAQALTLIPGVSRSGSTLTSGLFMGLQRETAARFSFLLGIPAITLAGLVELKDLLAEGIADGAALPLIMGVISAAIFSYLAIAGLLSFLKTQSTWVFIWYRLVFGVAILGAISAGILQNS.

8 consecutive transmembrane segments (helical) span residues 9 to 29 (FVLI…LEVF), 82 to 102 (GVAF…WYFW), 130 to 150 (LGIV…KTFI), 161 to 181 (LGAI…GEKL), 191 to 211 (LTMQ…IPGV), 236 to 256 (FLLG…DLLA), 265 to 285 (LPLI…IAGL), and 296 to 316 (VFIW…SAGI).

The protein belongs to the UppP family.

Its subcellular location is the cell inner membrane. The catalysed reaction is di-trans,octa-cis-undecaprenyl diphosphate + H2O = di-trans,octa-cis-undecaprenyl phosphate + phosphate + H(+). In terms of biological role, catalyzes the dephosphorylation of undecaprenyl diphosphate (UPP). Confers resistance to bacitracin. The sequence is that of Undecaprenyl-diphosphatase from Nostoc sp. (strain PCC 7120 / SAG 25.82 / UTEX 2576).